A 316-amino-acid polypeptide reads, in one-letter code: MTRTYENFQYLENKVKVQGFKNGPLPLQSLLQRLCSGPCHLLLSLGLGLLLLVIICVVGFQNSKFQRDLVTLRTDFSNFTSNTVAEIQALTSQGSSLEETIASLKAEVEGFKQERQAGVSELQEHTTQKAHLGHCPHCPSVCVPVHSEMLLRVQQLVQDLKKLTCQVATLNNNASTEGTCCPVNWVEHQDSCYWFSHSGMSWAEAEKYCQLKNAHLVVINSREEQNFVQKYLGSAYTWMGLSDPEGAWKWVDGTDYATGFQNWKPGQPDDWQGHGLGGGEDCAHFHPDGRWNDDVCQRPYHWVCEAGLGQTSQESH.

The Cytoplasmic portion of the chain corresponds to 1–39 (MTRTYENFQYLENKVKVQGFKNGPLPLQSLLQRLCSGPC). Positions 5-8 (YENF) match the Endocytosis signal motif. Residues 40-60 (HLLLSLGLGLLLLVIICVVGF) form a helical; Signal-anchor for type II membrane protein membrane-spanning segment. Residues 61–316 (QNSKFQRDLV…GLGQTSQESH (256 aa)) lie on the Extracellular side of the membrane. N-linked (GlcNAc...) asparagine glycosylation is found at N78 and N173. The stretch at 85–176 (AEIQALTSQG…VATLNNNAST (92 aa)) forms a coiled coil. 3 disulfides stabilise this stretch: C181–C192, C209–C304, and C282–C296. The 118-residue stretch at 188–305 (HQDSCYWFSH…CQRPYHWVCE (118 aa)) folds into the C-type lectin domain. V218, N220, E224, and D243 together coordinate Ca(2+). The a glycoprotein site is built by Q267 and D269. Residues D269, D270, E280, and D281 each contribute to the Ca(2+) site. E280 serves as a coordination point for a glycoprotein. Residues H286 and N292 each contribute to the a glycoprotein site. Residues N292, D293, and E305 each coordinate Ca(2+).

As to quaternary structure, interacts with A-, B- and C-domain containing PTPRC/CD45 isoforms: isoform 1/CD45ABC, isoform 3/CD45AB, isoform 5/CD45BC and isoform 7/CD45B. Does not interact with PTPRC/CD45 isoform 2/CD45RO, a memory T cell marker. Expressed in myeloid antigen presenting cells in lymph nodes and skin (at protein level). Expressed in dermal dendritic cells (at protein level).

It localises to the cell membrane. The protein localises to the early endosome membrane. The protein resides in the lysosome membrane. C-type lectin receptor involved in recognition of N-acetylgalactosamine (GalNAc)-terminated glycans by myeloid antigen presenting cells (APCs). Binds in a Ca(2+)-dependent manner to alpha- and beta-linked GalNAc residues on glycoprotein and glycolipid antigens, including alphaGalNAc- and Galbeta1-&gt;3GalNAc-O-Ser/Thr also known as Tn and T antigens, LacdiNAc epitope GalNAcbeta1-&gt;4GlcNAc and its derivative GalNAcbeta1-&gt;4-(Fucalpha1-&gt;3)GlcNAc, O-linked core 5 and 6 glycans, and GM2 and GD2 gangliosides. Acts as a signaling receptor at the interface of APC-T cell interactions. On immature dendritic cells, recognizes Tn antigen-carrying PTPRC/CD45 receptor on effector T cells and downregulates PTRPN/CD45 phosphatase activity with an impact on T cell activation threshold, cytokine production and proliferation. Modulates dendritic cell maturation toward a tolerogenic phenotype leading to generation of regulatory CD4-positive T cell subset with immune suppressive functions. Acts as an endocytic pattern recognition receptor involved in antitumor immunity. During tumorigenesis, recognizes Tn antigens and its sialylated forms Neu5Ac-Tn and Neu5Gc-Tn expressed on tumor cell mucins. On immature dendritic cells, can internalize Tn-terminated immunogens and target them to endolysosomal compartment for MHC class I and II antigen presentation to CD8-positive and CD4-positive T cells, respectively. The chain is C-type lectin domain family 10 member A from Homo sapiens (Human).